Reading from the N-terminus, the 441-residue chain is Methylenetetrahydrofolate--tRNA-(uracil-5-)-methyltransferase TrmFO (441 aa).

11–16 serves as a coordination point for FAD; the sequence is GGGLAG.

It belongs to the MnmG family. TrmFO subfamily. FAD serves as cofactor.

Its subcellular location is the cytoplasm. The enzyme catalyses uridine(54) in tRNA + (6R)-5,10-methylene-5,6,7,8-tetrahydrofolate + NADH + H(+) = 5-methyluridine(54) in tRNA + (6S)-5,6,7,8-tetrahydrofolate + NAD(+). It carries out the reaction uridine(54) in tRNA + (6R)-5,10-methylene-5,6,7,8-tetrahydrofolate + NADPH + H(+) = 5-methyluridine(54) in tRNA + (6S)-5,6,7,8-tetrahydrofolate + NADP(+). In terms of biological role, catalyzes the folate-dependent formation of 5-methyl-uridine at position 54 (M-5-U54) in all tRNAs. This is Methylenetetrahydrofolate--tRNA-(uracil-5-)-methyltransferase TrmFO from Syntrophus aciditrophicus (strain SB).